The sequence spans 253 residues: Triosephosphate isomerase (253 aa).

15-17 (NWK) lines the substrate pocket. The active-site Electrophile is the His-101. Residue Glu-171 is the Proton acceptor of the active site. Substrate is bound by residues Gly-177, Ser-216, and 237 to 238 (GG).

It belongs to the triosephosphate isomerase family. Homodimer.

The protein localises to the cytoplasm. It carries out the reaction D-glyceraldehyde 3-phosphate = dihydroxyacetone phosphate. The protein operates within carbohydrate biosynthesis; gluconeogenesis. Its pathway is carbohydrate degradation; glycolysis; D-glyceraldehyde 3-phosphate from glycerone phosphate: step 1/1. In terms of biological role, involved in the gluconeogenesis. Catalyzes stereospecifically the conversion of dihydroxyacetone phosphate (DHAP) to D-glyceraldehyde-3-phosphate (G3P). This is Triosephosphate isomerase from Caulobacter vibrioides (strain ATCC 19089 / CIP 103742 / CB 15) (Caulobacter crescentus).